We begin with the raw amino-acid sequence, 332 residues long: L-lactate dehydrogenase A chain (332 aa).

NAD(+) contacts are provided by residues 29–57 and arginine 99; that span reads GAVG…VEDK. Positions 106, 138, and 169 each coordinate substrate. Position 138 (asparagine 138) interacts with NAD(+). Catalysis depends on histidine 193, which acts as the Proton acceptor. Threonine 248 is a substrate binding site.

It belongs to the LDH/MDH superfamily. LDH family. As to quaternary structure, homotetramer.

The protein localises to the cytoplasm. The catalysed reaction is (S)-lactate + NAD(+) = pyruvate + NADH + H(+). Its pathway is fermentation; pyruvate fermentation to lactate; (S)-lactate from pyruvate: step 1/1. Interconverts simultaneously and stereospecifically pyruvate and lactate with concomitant interconversion of NADH and NAD(+). The sequence is that of L-lactate dehydrogenase A chain (LDHA) from Gallus gallus (Chicken).